The following is a 134-amino-acid chain: Holo-[acyl-carrier-protein] synthase (134 aa).

Mg(2+) contacts are provided by Asp8 and Glu59.

This sequence belongs to the P-Pant transferase superfamily. AcpS family. The cofactor is Mg(2+).

The protein localises to the cytoplasm. The enzyme catalyses apo-[ACP] + CoA = holo-[ACP] + adenosine 3',5'-bisphosphate + H(+). In terms of biological role, transfers the 4'-phosphopantetheine moiety from coenzyme A to a Ser of acyl-carrier-protein. The polypeptide is Holo-[acyl-carrier-protein] synthase (Zymomonas mobilis subsp. mobilis (strain ATCC 31821 / ZM4 / CP4)).